Consider the following 172-residue polypeptide: Probable chorismate pyruvate-lyase (172 aa).

Substrate contacts are provided by Met-37, Arg-79, Leu-117, and Glu-158.

It belongs to the UbiC family.

The protein localises to the cytoplasm. It catalyses the reaction chorismate = 4-hydroxybenzoate + pyruvate. The protein operates within cofactor biosynthesis; ubiquinone biosynthesis. Functionally, removes the pyruvyl group from chorismate, with concomitant aromatization of the ring, to provide 4-hydroxybenzoate (4HB) for the ubiquinone pathway. This is Probable chorismate pyruvate-lyase from Bartonella quintana (strain Toulouse) (Rochalimaea quintana).